The sequence spans 82 residues: Small ribosomal subunit protein bS16 (82 aa).

This sequence belongs to the bacterial ribosomal protein bS16 family.

The protein is Small ribosomal subunit protein bS16 of Actinobacillus pleuropneumoniae serotype 5b (strain L20).